Consider the following 467-residue polypeptide: Polygalacturonase (467 aa).

A signal peptide spans 1-27 (MALQRRFFQFVIITLLIPSFILGYTSA). Catalysis depends on Asp-283, which acts as the Proton donor. The N-linked (GlcNAc...) asparagine glycan is linked to Asn-290. Residue His-306 is part of the active site.

This sequence belongs to the glycosyl hydrolase 28 family.

Its subcellular location is the secreted. The protein localises to the cell wall. It catalyses the reaction (1,4-alpha-D-galacturonosyl)n+m + H2O = (1,4-alpha-D-galacturonosyl)n + (1,4-alpha-D-galacturonosyl)m.. In terms of biological role, acts in concert with the pectinesterase, in the ripening process. Is involved in cell wall metabolism, specifically in polyuronide degradation. This chain is Polygalacturonase, found in Actinidia deliciosa (Kiwi).